The primary structure comprises 442 residues: DDB1- and CUL4-associated factor 12-B (442 aa).

Residues 1-13 are compositionally biased toward basic residues; it reads MTRRPVSRKRRAT. The tract at residues 1–31 is disordered; sequence MTRRPVSRKRRATHGTGPGEQSDWDHSAHKR. 4 WD repeats span residues 132-173, 177-215, 245-284, and 333-370; these read SHQS…PVCV, GHNDWIFSIAWISDTMAVSGSRDGFMALWEMTDEVVNKR, PVNCKVRALAFNGNNKELGAVSLDGFFHLWKAEQTLSKLL, and EQGSGIRSVSFYEHIVTVGTGQGALLFYDIRAQRFLED.

This sequence belongs to the WD repeat DCAF12 family. Component of the DCX(DCAF12) E3 ubiquitin ligase complex, at least composed of cul4 (cul4a or cul4b), ddb1, dcaf12 and rbx1.

It localises to the cytoplasm. The protein resides in the cytoskeleton. Its subcellular location is the microtubule organizing center. The protein localises to the centrosome. It is found in the nucleus. It functions in the pathway protein modification; protein ubiquitination. Substrate-recognition component of a DCX (DDB1-CUL4-X-box) E3 ubiquitin-protein ligase complex of the DesCEND (destruction via C-end degrons) pathway, which recognizes a C-degron located at the extreme C terminus of target proteins, leading to their ubiquitination and degradation. The C-degron recognized by the DesCEND pathway is usually a motif of less than ten residues and can be present in full-length proteins, truncated proteins or proteolytically cleaved forms. The DCX(DCAF12) complex specifically recognizes proteins with a diglutamate (Glu-Glu) at the C-terminus leading to their ubiquitination and degradation. Also directly recognizes the C-terminal glutamate-leucine (Glu-Leu) degron as an alternative degron in proteins leading to their ubiquitination and degradation. This chain is DDB1- and CUL4-associated factor 12-B (dcaf12-b), found in Xenopus laevis (African clawed frog).